The primary structure comprises 321 residues: Homoserine O-acetyltransferase (321 aa).

Residue C142 is the Acyl-thioester intermediate of the active site. The substrate site is built by K163 and S192. The Proton acceptor role is filled by H235. E237 is a catalytic residue. Residue R249 participates in substrate binding.

This sequence belongs to the MetA family.

It localises to the cytoplasm. It catalyses the reaction L-homoserine + acetyl-CoA = O-acetyl-L-homoserine + CoA. Its pathway is amino-acid biosynthesis; L-methionine biosynthesis via de novo pathway; O-acetyl-L-homoserine from L-homoserine: step 1/1. Transfers an acetyl group from acetyl-CoA to L-homoserine, forming acetyl-L-homoserine. In Lactococcus lactis subsp. lactis (strain IL1403) (Streptococcus lactis), this protein is Homoserine O-acetyltransferase.